Reading from the N-terminus, the 43-residue chain is Protein PsbN (43 aa).

The chain crosses the membrane as a helical span at residues 7–27; that stretch reads LIIFIASLLLGLTGYSIYTAF.

The protein belongs to the PsbN family.

The protein localises to the plastid. It localises to the chloroplast thylakoid membrane. In terms of biological role, may play a role in photosystem I and II biogenesis. This is Protein PsbN from Guillardia theta (Cryptophyte).